The primary structure comprises 129 residues: uncharacterized protein (129 aa).

The N-terminal stretch at 1–21 (MAQNKTIAVALLLATLVAVMG) is a signal peptide.

This is an uncharacterized protein from Oryza sativa subsp. japonica (Rice).